The primary structure comprises 169 residues: Ureidoglycolate lyase (169 aa).

It belongs to the ureidoglycolate lyase family. Homodimer. Ni(2+) is required as a cofactor.

It catalyses the reaction (S)-ureidoglycolate = urea + glyoxylate. The protein operates within nitrogen metabolism; (S)-allantoin degradation. In terms of biological role, catalyzes the catabolism of the allantoin degradation intermediate (S)-ureidoglycolate, generating urea and glyoxylate. Involved in the utilization of allantoin as nitrogen source. This Pseudomonas aeruginosa (strain LESB58) protein is Ureidoglycolate lyase.